The following is a 170-amino-acid chain: Crossover junction endodeoxyribonuclease RuvC (170 aa).

Active-site residues include aspartate 12, glutamate 72, and aspartate 144. The Mg(2+) site is built by aspartate 12, glutamate 72, and aspartate 144.

This sequence belongs to the RuvC family. As to quaternary structure, homodimer which binds Holliday junction (HJ) DNA. The HJ becomes 2-fold symmetrical on binding to RuvC with unstacked arms; it has a different conformation from HJ DNA in complex with RuvA. In the full resolvosome a probable DNA-RuvA(4)-RuvB(12)-RuvC(2) complex forms which resolves the HJ. The cofactor is Mg(2+).

It localises to the cytoplasm. The enzyme catalyses Endonucleolytic cleavage at a junction such as a reciprocal single-stranded crossover between two homologous DNA duplexes (Holliday junction).. In terms of biological role, the RuvA-RuvB-RuvC complex processes Holliday junction (HJ) DNA during genetic recombination and DNA repair. Endonuclease that resolves HJ intermediates. Cleaves cruciform DNA by making single-stranded nicks across the HJ at symmetrical positions within the homologous arms, yielding a 5'-phosphate and a 3'-hydroxyl group; requires a central core of homology in the junction. The consensus cleavage sequence is 5'-(A/T)TT(C/G)-3'. Cleavage occurs on the 3'-side of the TT dinucleotide at the point of strand exchange. HJ branch migration catalyzed by RuvA-RuvB allows RuvC to scan DNA until it finds its consensus sequence, where it cleaves and resolves the cruciform DNA. This chain is Crossover junction endodeoxyribonuclease RuvC, found in Nitrobacter hamburgensis (strain DSM 10229 / NCIMB 13809 / X14).